A 264-amino-acid chain; its full sequence is Proteasome subunit beta type-5 (264 aa).

A propeptide spans 1 to 59 (removed in mature form); the sequence is MALASVLQRPMPVNQHGFFGLGGGADLLDLGPGSPGDGLSLAAPSWGVPEEPRIEMLHG. Catalysis depends on Thr60, which acts as the Nucleophile. Residue Ala108 coordinates bortezomib.

It belongs to the peptidase T1B family. The 26S proteasome consists of a 20S proteasome core and two 19S regulatory subunits. The 20S proteasome core is a barrel-shaped complex made of 28 subunits that are arranged in four stacked rings. The two outer rings are each formed by seven alpha subunits, and the two inner rings are formed by seven beta subunits. The proteolytic activity is exerted by three beta-subunits PSMB5, PSMB6 and PSMB7. Directly interacts with POMP. Interacts with ABCB1 and TAP1. In terms of tissue distribution, expressed in uterus at the embryo implantation site.

The protein localises to the cytoplasm. It localises to the nucleus. It catalyses the reaction Cleavage of peptide bonds with very broad specificity.. In terms of biological role, component of the 20S core proteasome complex involved in the proteolytic degradation of most intracellular proteins. This complex plays numerous essential roles within the cell by associating with different regulatory particles. Associated with two 19S regulatory particles, forms the 26S proteasome and thus participates in the ATP-dependent degradation of ubiquitinated proteins. The 26S proteasome plays a key role in the maintenance of protein homeostasis by removing misfolded or damaged proteins that could impair cellular functions, and by removing proteins whose functions are no longer required. Associated with the PA200 or PA28, the 20S proteasome mediates ubiquitin-independent protein degradation. This type of proteolysis is required in several pathways including spermatogenesis (20S-PA200 complex) or generation of a subset of MHC class I-presented antigenic peptides (20S-PA28 complex). Within the 20S core complex, PSMB5 displays a chymotrypsin-like activity. This chain is Proteasome subunit beta type-5 (Psmb5), found in Mus musculus (Mouse).